Consider the following 431-residue polypeptide: STE20-related kinase adapter protein alpha (431 aa).

Ser2 and Ser46 each carry phosphoserine. Disordered regions lie at residues 32 to 52 (EQPPGDTRRKANEASSESIAS) and 314 to 344 (PSRSIANPGLNDSLAAGSLRPSNGDSPSHPY). The 311-residue stretch at 69–379 (YELLTIIGKG…ASTLLNHSFF (311 aa)) folds into the Protein kinase domain. Phosphothreonine; by LKB1 is present on Thr419.

Belongs to the protein kinase superfamily. STE Ser/Thr protein kinase family. STE20 subfamily. Component of a trimeric complex composed of STK11/LKB1, STRAD (STRADA or STRADB) and CAB39/MO25 (CAB39/MO25alpha or CAB39L/MO25beta): the complex tethers STK11/LKB1 in the cytoplasm and stimulates its catalytic activity.

The protein localises to the nucleus. Its subcellular location is the cytoplasm. Its function is as follows. Pseudokinase which, in complex with CAB39/MO25 (CAB39/MO25alpha or CAB39L/MO25beta), binds to and activates STK11/LKB1. Adopts a closed conformation typical of active protein kinases and binds STK11/LKB1 as a pseudosubstrate, promoting conformational change of STK11/LKB1 in an active conformation. In Mus musculus (Mouse), this protein is STE20-related kinase adapter protein alpha (Strada).